The following is a 103-amino-acid chain: Large ribosomal subunit protein bL21 (103 aa).

The protein belongs to the bacterial ribosomal protein bL21 family. In terms of assembly, part of the 50S ribosomal subunit. Contacts protein L20.

In terms of biological role, this protein binds to 23S rRNA in the presence of protein L20. This is Large ribosomal subunit protein bL21 from Lactobacillus johnsonii (strain CNCM I-12250 / La1 / NCC 533).